A 301-amino-acid polypeptide reads, in one-letter code: Ribosomal RNA small subunit methyltransferase H (301 aa).

Residues 31 to 33 (GGY), D49, F76, D97, and Q104 contribute to the S-adenosyl-L-methionine site.

The protein belongs to the methyltransferase superfamily. RsmH family.

It localises to the cytoplasm. It carries out the reaction cytidine(1402) in 16S rRNA + S-adenosyl-L-methionine = N(4)-methylcytidine(1402) in 16S rRNA + S-adenosyl-L-homocysteine + H(+). Its function is as follows. Specifically methylates the N4 position of cytidine in position 1402 (C1402) of 16S rRNA. The chain is Ribosomal RNA small subunit methyltransferase H from Ehrlichia ruminantium (strain Welgevonden).